We begin with the raw amino-acid sequence, 105 residues long: Large ribosomal subunit protein uL24 (105 aa).

This sequence belongs to the universal ribosomal protein uL24 family. As to quaternary structure, part of the 50S ribosomal subunit.

Its function is as follows. One of two assembly initiator proteins, it binds directly to the 5'-end of the 23S rRNA, where it nucleates assembly of the 50S subunit. In terms of biological role, one of the proteins that surrounds the polypeptide exit tunnel on the outside of the subunit. In Xanthomonas oryzae pv. oryzae (strain PXO99A), this protein is Large ribosomal subunit protein uL24.